The primary structure comprises 523 residues: Arylsulfatase K (523 aa).

The signal sequence occupies residues 1-16 (MLRVFVLLIFNVNAYC). The Ca(2+) site is built by Asp-35 and Cys-75. Cys-75 functions as the Nucleophile in the catalytic mechanism. A 3-oxoalanine (Cys) modification is found at Cys-75. N-linked (GlcNAc...) asparagine glycosylation is present at Asn-103. Substrate is bound by residues Lys-123 and His-246. An N-linked (GlcNAc...) asparagine glycan is attached at Asn-257. Ca(2+) is bound by residues Asp-308 and His-309. Asn-405 is a glycosylation site (N-linked (GlcNAc...) asparagine).

This sequence belongs to the sulfatase family. Requires Ca(2+) as cofactor. The conversion to 3-oxoalanine (also known as C-formylglycine, FGly), of a serine or cysteine residue in prokaryotes and of a cysteine residue in eukaryotes, is critical for catalytic activity.

Its subcellular location is the secreted. It is found in the lysosome. The enzyme catalyses an aryl sulfate + H2O = a phenol + sulfate + H(+). It carries out the reaction Hydrolysis of the 2-sulfate groups of the 2-O-sulfo-D-glucuronate residues of chondroitin sulfate, heparin and heparitin sulfate.. Catalyzes the hydrolysis of pseudosubstrates such as p-nitrocatechol sulfate and p-nitrophenyl sulfate. Catalyzes the hydrolysis of the 2-sulfate groups of the 2-O-sulfo-D-glucuronate residues of chondroitin sulfate, heparin and heparitin sulfate. Acts selectively on 2-sulfoglucuronate and lacks activity against 2-sulfoiduronate. The sequence is that of Arylsulfatase K (arsk) from Danio rerio (Zebrafish).